Consider the following 262-residue polypeptide: Abhydrolase domain-containing protein ACTT2 (262 aa).

The Peroxisomal targeting signal type 1 motif lies at 260–262 (SKL).

Belongs to the AB hydrolase superfamily. AKT2 hydrolase family.

The protein localises to the peroxisome. The protein operates within mycotoxin biosynthesis. Abhydrolase domain-containing protein; part of the gene clusters that mediate the biosynthesis of the host-selective toxins (HSTs) ACT-toxins responsible for brown spot of tangerine disease by the tangerine pathotype which affects tangerines and mandarins. ACT-toxins consist of three moieties, 9,10-epoxy-8-hydroxy-9-methyl-decatrienoic acid (EDA), valine and a polyketide. ACT-toxin I is toxic to both citrus and pear; toxin II the 5''-deoxy derivative of ACT-toxin I, is highly toxic to pear and slightly toxic to citrus. On cellular level, ACT-toxins affect plasma membrane of susceptible cells and cause a sudden increase in loss of K(+) after a few minutes of toxin treatment. The acyl-CoA ligase ACTT1, the hydrolase ACTT2, the enoyl-CoA hydratases ACTT3 and ACTT6, and the acyl-CoA synthetase ACTT5 are all involved in the biosynthesis of the AK-, AF- and ACT-toxin common 9,10-epoxy-8-hydroxy-9-methyl-decatrienoic acid (EDA) structural moiety. The exact role of each enzyme, and of additional enzymes identified within the AF-toxin clusters have still to be determined. On the other hand, ACTTS1 to ACTTS4 are specific to the tangerine pathotype. The function of ACTTS3 is to elongate the polyketide chain portion of ACT-toxin that is unique to this toxin. The enoyl-reductase ACTTS2 might complement the missing enoyl-reductase (ER) domain in ACTTS3 in the synthesis of the polyketide portion of ACT-toxin. The roles of the nonribosomal peptide synthetases-related proteins ACTTS1 and ACTTS4 have also still not been elucidated. In Alternaria alternata (Alternaria rot fungus), this protein is Abhydrolase domain-containing protein ACTT2.